A 637-amino-acid chain; its full sequence is Early transcription factor 70 kDa subunit (637 aa).

One can recognise a Helicase ATP-binding domain in the interval 32-185; that stretch reads RTIIDENRSV…GHIIDLMSEE (154 aa). 45–52 is an ATP binding site; it reads HIMGSGKT. The DEXH box signature appears at 135 to 138; the sequence is DEAH. The Helicase C-terminal domain occupies 327-507; that stretch reads KFKYFINRIQ…VLPFDIKKLL (181 aa).

Belongs to the helicase family. VETF subfamily. As to quaternary structure, heterodimer of a 70 kDa and a 82 kDa subunit. Part of the early transcription complex composed of ETF, RAP94/OPG109, and the DNA-directed RNA polymerase.

It is found in the virion. Its function is as follows. Acts with RNA polymerase to initiate transcription from early gene promoters. Is recruited by the RPO-associated protein of 94 kDa RAP94/OPG109 to form the early transcription complex, which also contains the core RNA polymerase. ETF heterodimer binds to early gene promoters. This Homo sapiens (Human) protein is Early transcription factor 70 kDa subunit (OPG118).